We begin with the raw amino-acid sequence, 79 residues long: UPF0150 protein ssr1765 (79 aa).

It belongs to the UPF0150 family.

This chain is UPF0150 protein ssr1765, found in Synechocystis sp. (strain ATCC 27184 / PCC 6803 / Kazusa).